Reading from the N-terminus, the 128-residue chain is Con-Ins F2c (128 aa).

The N-terminal stretch at 1–24 (MTTSSYFLLVALGLLLYVCRSSFG) is a signal peptide. Cystine bridges form between cysteine 29/cysteine 104, cysteine 41/cysteine 107, cysteine 53/cysteine 120, and cysteine 106/cysteine 111. Positions 59 to 89 (LQGGTGKKRGRASLLRKRRAFLSMLKARAKR) are cleaved as a propeptide — c peptide. The residue at position 115 (glutamate 115) is a 4-carboxyglutamate; partial. The residue at position 127 (serine 127) is a Serine amide.

This sequence belongs to the insulin family. As to quaternary structure, heterodimer of A and B chains; disulfide-linked. In terms of tissue distribution, expressed by the venom gland.

It localises to the secreted. Functionally, this venom insulin facilitates prey capture by rapidly inducing hypoglycemic shock. Intraperitoneal injection of this peptide into zebrafish lowers blood glucose with the same potency than human insulin. In vivo, when applied to water, this peptide reduces overall locomotor activity of zebrafish larvae, observed as a significant decrease in the percentage of time spent swimming and movement frequency. This chain is Con-Ins F2c, found in Conus floridulus (Cone snail).